The sequence spans 312 residues: Ribosomal RNA small subunit methyltransferase H (312 aa).

Residues 35–37, aspartate 55, phenylalanine 79, aspartate 100, and glutamine 107 contribute to the S-adenosyl-L-methionine site; that span reads GGH.

Belongs to the methyltransferase superfamily. RsmH family.

The protein localises to the cytoplasm. It catalyses the reaction cytidine(1402) in 16S rRNA + S-adenosyl-L-methionine = N(4)-methylcytidine(1402) in 16S rRNA + S-adenosyl-L-homocysteine + H(+). Its function is as follows. Specifically methylates the N4 position of cytidine in position 1402 (C1402) of 16S rRNA. This is Ribosomal RNA small subunit methyltransferase H from Azoarcus sp. (strain BH72).